The following is a 463-amino-acid chain: Glycine--tRNA ligase (463 aa).

Arg98 and Glu174 together coordinate substrate. ATP contacts are provided by residues 206 to 208 (RNE), 216 to 221 (FRTREF), 290 to 291 (EL), and 334 to 337 (GADR). 221–225 (FEQME) lines the substrate pocket. Position 330-334 (330-334 (EPSLG)) interacts with substrate.

The protein belongs to the class-II aminoacyl-tRNA synthetase family. In terms of assembly, homodimer.

The protein localises to the cytoplasm. The enzyme catalyses tRNA(Gly) + glycine + ATP = glycyl-tRNA(Gly) + AMP + diphosphate. Its function is as follows. Catalyzes the attachment of glycine to tRNA(Gly). This is Glycine--tRNA ligase from Staphylococcus aureus (strain bovine RF122 / ET3-1).